A 337-amino-acid polypeptide reads, in one-letter code: tRNA(Ile)-lysidine synthase (337 aa).

S40–S45 contacts ATP.

It belongs to the tRNA(Ile)-lysidine synthase family.

It is found in the cytoplasm. The catalysed reaction is cytidine(34) in tRNA(Ile2) + L-lysine + ATP = lysidine(34) in tRNA(Ile2) + AMP + diphosphate + H(+). Ligates lysine onto the cytidine present at position 34 of the AUA codon-specific tRNA(Ile) that contains the anticodon CAU, in an ATP-dependent manner. Cytidine is converted to lysidine, thus changing the amino acid specificity of the tRNA from methionine to isoleucine. The protein is tRNA(Ile)-lysidine synthase of Parasynechococcus marenigrum (strain WH8102).